The primary structure comprises 543 residues: Dipeptide-binding protein DppE (543 aa).

Residues 1–22 (MKRVKKLWGMGLALGLSFALMG) form the signal peptide. C23 carries the N-palmitoyl cysteine lipid modification. A lipid anchor (S-diacylglycerol cysteine) is attached at C23.

It belongs to the bacterial solute-binding protein 5 family.

It localises to the cell membrane. Its function is as follows. Probably part of the ABC transporter DppBCDE involved in dipeptide transport. The polypeptide is Dipeptide-binding protein DppE (dppE) (Bacillus subtilis (strain 168)).